We begin with the raw amino-acid sequence, 596 residues long: Elongation factor 4 (596 aa).

Residues 2 to 184 (KHIRNFSIIA…VIVEQIPPPE (183 aa)) enclose the tr-type G domain. GTP-binding positions include 14-19 (DHGKST) and 131-134 (NKID).

The protein belongs to the TRAFAC class translation factor GTPase superfamily. Classic translation factor GTPase family. LepA subfamily.

The protein resides in the cell inner membrane. It catalyses the reaction GTP + H2O = GDP + phosphate + H(+). Functionally, required for accurate and efficient protein synthesis under certain stress conditions. May act as a fidelity factor of the translation reaction, by catalyzing a one-codon backward translocation of tRNAs on improperly translocated ribosomes. Back-translocation proceeds from a post-translocation (POST) complex to a pre-translocation (PRE) complex, thus giving elongation factor G a second chance to translocate the tRNAs correctly. Binds to ribosomes in a GTP-dependent manner. This Shewanella pealeana (strain ATCC 700345 / ANG-SQ1) protein is Elongation factor 4.